The sequence spans 606 residues: Leucine-rich repeat and immunoglobulin-like domain-containing nogo receptor-interacting protein 2 (606 aa).

Positions 1-27 (MLHTAIPCWQPFLGLAVVLLLMGSTIG) are cleaved as a signal peptide. An LRRNT domain is found at 28-57 (CPARCECSAQNKSVSCHRRRLLAIPEGIPI). Over 28–545 (CPARCECSAQ…LDLKTILVST (518 aa)) the chain is Extracellular. Asparagine 38 is a glycosylation site (N-linked (GlcNAc...) asparagine). LRR repeat units lie at residues 58 to 79 (ETKILDLSKNRLKSINPEEFIS), 82 to 103 (LLEEIDLSDNIIANVEPGAFNN), 106 to 127 (NLRSLRLKGNRLKLVPLGVFTG), 130 to 151 (NLTKLDISENKIVILLDYMFQD), 154 to 175 (NLKSLEVGDNDLVYISHRAFSG), 178 to 199 (SLEQLTLEKCNLTAVPTEALSH), 202 to 223 (SLIALHLKHLNINNMPVYAFKR), 226 to 247 (HLKNLEIDYWPLLDLMPANSLY), 250 to 271 (NLTSLSITNTNLSTVPFLAFKH), 274 to 295 (YLTHLNLSYNPISTIEAGMFSD), 298 to 319 (RLQELHIVGAQLRTIEPHSFQG), and 322 to 343 (FLRVLNVSQNLLETLEENVFSS). Asparagine 130 carries an N-linked (GlcNAc...) asparagine glycan. A glycan (N-linked (GlcNAc...) asparagine) is linked at asparagine 188. 3 N-linked (GlcNAc...) asparagine glycosylation sites follow: asparagine 250, asparagine 260, and asparagine 279. Asparagine 327 carries N-linked (GlcNAc...) asparagine glycosylation. In terms of domain architecture, LRRCT spans 355–409 (NPLACDCRLLWLLQRQPNLQFGGQQPMCAGPDTIRERSFKDFHSTALSFYFTCKK). Cysteines 432 and 483 form a disulfide. 3 N-linked (GlcNAc...) asparagine glycosylation sites follow: asparagine 491, asparagine 522, and asparagine 527. A helical membrane pass occupies residues 546-566 (AMGCFTFLGVVLFCFLLLFVW). Over 567–606 (SRGKGKHKNSIDLEYVPRKNNGAVVEGEVAGPRRFNMKMI) the chain is Cytoplasmic.

Its subcellular location is the membrane. The chain is Leucine-rich repeat and immunoglobulin-like domain-containing nogo receptor-interacting protein 2 (Lingo2) from Mus musculus (Mouse).